The sequence spans 79 residues: Small ribosomal subunit protein uS17 (79 aa).

Belongs to the universal ribosomal protein uS17 family. As to quaternary structure, part of the 30S ribosomal subunit.

Functionally, one of the primary rRNA binding proteins, it binds specifically to the 5'-end of 16S ribosomal RNA. This Rhizobium rhizogenes (strain K84 / ATCC BAA-868) (Agrobacterium radiobacter) protein is Small ribosomal subunit protein uS17.